The sequence spans 145 residues: Deoxyuridine 5'-triphosphate nucleotidohydrolase (145 aa).

Substrate is bound by residues 63-65, glutamine 76, and 80-82; these read RSG and TVD.

It belongs to the dUTPase family. The cofactor is Mg(2+).

It catalyses the reaction dUTP + H2O = dUMP + diphosphate + H(+). It participates in pyrimidine metabolism; dUMP biosynthesis; dUMP from dCTP (dUTP route): step 2/2. Functionally, this enzyme is involved in nucleotide metabolism: it produces dUMP, the immediate precursor of thymidine nucleotides and it decreases the intracellular concentration of dUTP so that uracil cannot be incorporated into DNA. The sequence is that of Deoxyuridine 5'-triphosphate nucleotidohydrolase from Chlamydia muridarum (strain MoPn / Nigg).